The primary structure comprises 695 residues: Zinc finger SWIM domain-containing protein 3 (695 aa).

The tract at residues Asn434–Lys490 is disordered. The segment covering Asp475–Ser489 has biased composition (low complexity). The SWIM-type zinc-finger motif lies at Val530–Gln571.

This is Zinc finger SWIM domain-containing protein 3 (Zswim3) from Mus musculus (Mouse).